Reading from the N-terminus, the 232-residue chain is MIPTSFPPREEIARLTARMLLEIQAVHFRPHEPFTLASGLPSPTYIDCRKLISYPRIRATLMDFLTVTLLRDAGFEAFDNVAGGETAGIPFAAMMAERLALPMTYVRKKPKGYGRNARIEGVMTEGQRVLLVEDLTTDGGSKLSFVDAIRDTGATCAHTAVIFYYGIFPETIGRLQAHGVTLHHLCTWWDVLAEARASDAFDAGTLAEVECFLSNPRDWQDARKPADPAAGL.

5-phospho-alpha-D-ribose 1-diphosphate contacts are provided by residues R107, K108, K111, and 133 to 141; that span reads EDLTTDGGS. An orotate-binding site is contributed by T137.

This sequence belongs to the purine/pyrimidine phosphoribosyltransferase family. PyrE subfamily. In terms of assembly, homodimer. Mg(2+) serves as cofactor.

The enzyme catalyses orotidine 5'-phosphate + diphosphate = orotate + 5-phospho-alpha-D-ribose 1-diphosphate. It participates in pyrimidine metabolism; UMP biosynthesis via de novo pathway; UMP from orotate: step 1/2. Its function is as follows. Catalyzes the transfer of a ribosyl phosphate group from 5-phosphoribose 1-diphosphate to orotate, leading to the formation of orotidine monophosphate (OMP). This Cereibacter sphaeroides (strain ATCC 17025 / ATH 2.4.3) (Rhodobacter sphaeroides) protein is Orotate phosphoribosyltransferase.